The following is a 131-amino-acid chain: MDKNLLEAVKFDEKGLVCAIAQDAETKRVLMVAWMNAEALQKTVETGFAHYYSRSRQKQWMKGEESGHTQKVRELRLDCDGDAIVMLIAQNGGIACHTGRESCFYKVWRGSAWETADAVLKDEKEIYGSTH.

Mg(2+) is bound at residue D78. C79 provides a ligand contact to Zn(2+). Mg(2+) is bound by residues D80 and D82. The Zn(2+) site is built by C96 and C103.

This sequence belongs to the PRA-CH family. Homodimer. Requires Mg(2+) as cofactor. The cofactor is Zn(2+).

It is found in the cytoplasm. The catalysed reaction is 1-(5-phospho-beta-D-ribosyl)-5'-AMP + H2O = 1-(5-phospho-beta-D-ribosyl)-5-[(5-phospho-beta-D-ribosylamino)methylideneamino]imidazole-4-carboxamide. Its pathway is amino-acid biosynthesis; L-histidine biosynthesis; L-histidine from 5-phospho-alpha-D-ribose 1-diphosphate: step 3/9. Functionally, catalyzes the hydrolysis of the adenine ring of phosphoribosyl-AMP. This is Phosphoribosyl-AMP cyclohydrolase from Neisseria meningitidis serogroup C / serotype 2a (strain ATCC 700532 / DSM 15464 / FAM18).